The following is a 112-amino-acid chain: ATP synthase epsilon chain (112 aa).

The protein belongs to the ATPase epsilon chain family. F-type ATPases have 2 components, CF(1) - the catalytic core - and CF(0) - the membrane proton channel. CF(1) has five subunits: alpha(3), beta(3), gamma(1), delta(1), epsilon(1). CF(0) has three main subunits: a, b and c.

The protein localises to the cell inner membrane. Functionally, produces ATP from ADP in the presence of a proton gradient across the membrane. This Rickettsia conorii (strain ATCC VR-613 / Malish 7) protein is ATP synthase epsilon chain (atpC).